The chain runs to 175 residues: Ribosome maturation factor RimM (175 aa).

A PRC barrel domain is found at 96–175 (EGDYYWHDLI…TIEVDWDAGF (80 aa)).

The protein belongs to the RimM family. As to quaternary structure, binds ribosomal protein uS19.

The protein resides in the cytoplasm. An accessory protein needed during the final step in the assembly of 30S ribosomal subunit, possibly for assembly of the head region. Essential for efficient processing of 16S rRNA. May be needed both before and after RbfA during the maturation of 16S rRNA. It has affinity for free ribosomal 30S subunits but not for 70S ribosomes. This is Ribosome maturation factor RimM from Haemophilus influenzae (strain PittEE).